The following is a 423-amino-acid chain: Glucose-1-phosphate adenylyltransferase (423 aa).

Alpha-D-glucose 1-phosphate contacts are provided by residues Tyr-108, Gly-173, 188–189, and Ser-207; that span reads EK.

The protein belongs to the bacterial/plant glucose-1-phosphate adenylyltransferase family. In terms of assembly, homotetramer.

It carries out the reaction alpha-D-glucose 1-phosphate + ATP + H(+) = ADP-alpha-D-glucose + diphosphate. It functions in the pathway glycan biosynthesis; glycogen biosynthesis. Functionally, involved in the biosynthesis of ADP-glucose, a building block required for the elongation reactions to produce glycogen. Catalyzes the reaction between ATP and alpha-D-glucose 1-phosphate (G1P) to produce pyrophosphate and ADP-Glc. The chain is Glucose-1-phosphate adenylyltransferase from Francisella tularensis subsp. novicida (strain U112).